Reading from the N-terminus, the 377-residue chain is tRNA-queuosine alpha-mannosyltransferase (377 aa).

This sequence belongs to the glycosyltransferase group 1 family. Glycosyltransferase 4 subfamily.

The enzyme catalyses queuosine(34) in tRNA(Asp) + GDP-alpha-D-mannose = O-4''-alpha-D-mannosylqueuosine(34) in tRNA(Asp) + GDP + H(+). Functionally, glycosyltransferase that specifically catalyzes mannosylation of cytoplasmic tRNA(Asp) modified with queuosine at position 34 (queuosine(34)). Mannosylates the cyclopentene moiety of queuosine(34) in tRNA(Asp) to form mannosyl-queuosine(34). This chain is tRNA-queuosine alpha-mannosyltransferase, found in Drosophila melanogaster (Fruit fly).